The sequence spans 84 residues: Small ribosomal subunit protein bS16 (84 aa).

The protein belongs to the bacterial ribosomal protein bS16 family.

This chain is Small ribosomal subunit protein bS16, found in Delftia acidovorans (strain DSM 14801 / SPH-1).